The chain runs to 242 residues: Capsid protein (242 aa).

Positions 1–42 (MPYKRKLTSYFPQSKRFRGAKSGMAVVKTSASRRLYKKGKRK) match the Bipartite nuclear localization signal motif.

Belongs to the geminiviridae capsid protein family. As to quaternary structure, homomultimer. Binds to single-stranded and double-stranded viral DNA. Interacts (via nuclear localization signal) with host importin alpha-1a.

The protein localises to the virion. Its subcellular location is the host nucleus. Its function is as follows. Encapsidates the viral genome into characteristic twinned ('geminate') particles. Binds the genomic viral ssDNA and shuttles it into and out of the cell nucleus. Plays a role in protection of the genome from degradation, virus acquisition and transmission by insect vectors, infectivity, and systemic movement. The CP of monopartite geminiviruses is absolutely essential for virus movement. The polypeptide is Capsid protein (Solanum lycopersicum (Tomato)).